We begin with the raw amino-acid sequence, 632 residues long: tRNA uridine 5-carboxymethylaminomethyl modification enzyme MnmG (632 aa).

Residue 14–19 (GAGHAG) participates in FAD binding. 273 to 287 (GPRYCPSFEDKIMRF) contributes to the NAD(+) binding site.

This sequence belongs to the MnmG family. In terms of assembly, homodimer. Heterotetramer of two MnmE and two MnmG subunits. FAD serves as cofactor.

The protein resides in the cytoplasm. Its function is as follows. NAD-binding protein involved in the addition of a carboxymethylaminomethyl (cmnm) group at the wobble position (U34) of certain tRNAs, forming tRNA-cmnm(5)s(2)U34. This is tRNA uridine 5-carboxymethylaminomethyl modification enzyme MnmG from Clostridium novyi (strain NT).